A 240-amino-acid polypeptide reads, in one-letter code: Phosphoribosylaminoimidazole-succinocarboxamide synthase (240 aa).

This sequence belongs to the SAICAR synthetase family.

It carries out the reaction 5-amino-1-(5-phospho-D-ribosyl)imidazole-4-carboxylate + L-aspartate + ATP = (2S)-2-[5-amino-1-(5-phospho-beta-D-ribosyl)imidazole-4-carboxamido]succinate + ADP + phosphate + 2 H(+). It functions in the pathway purine metabolism; IMP biosynthesis via de novo pathway; 5-amino-1-(5-phospho-D-ribosyl)imidazole-4-carboxamide from 5-amino-1-(5-phospho-D-ribosyl)imidazole-4-carboxylate: step 1/2. This is Phosphoribosylaminoimidazole-succinocarboxamide synthase from Wolbachia pipientis subsp. Culex pipiens (strain wPip).